The primary structure comprises 178 residues: uncharacterized protein (178 aa).

The helical transmembrane segment at 7 to 29 threads the bilayer; it reads FFVIFSILWGSLFLFSIIGSLGT.

It localises to the membrane. This is an uncharacterized protein from Bacillus subtilis (strain 168).